Consider the following 890-residue polypeptide: Translation initiation factor IF-2 (890 aa).

The tract at residues 50 to 304 (LRQGSPEQEE…LQQEFERPTA (255 aa)) is disordered. 3 stretches are compositionally biased toward basic and acidic residues: residues 112–125 (KRSDIEAEEKRKQE), 136–147 (RALEQEEAKREE), and 217–262 (ALKE…QEAK). The tr-type G domain maps to 390-559 (GRAPVVTVMG…VLQAELQELK (170 aa)). Residues 399-406 (GHVDHGKT) form a G1 region. 399-406 (GHVDHGKT) provides a ligand contact to GTP. The G2 stretch occupies residues 424–428 (GITQH). The interval 445–448 (DTPG) is G3. Residues 445–449 (DTPGH) and 499–502 (NKMD) contribute to the GTP site. The tract at residues 499 to 502 (NKMD) is G4. The tract at residues 535–537 (SAM) is G5.

The protein belongs to the TRAFAC class translation factor GTPase superfamily. Classic translation factor GTPase family. IF-2 subfamily.

It is found in the cytoplasm. One of the essential components for the initiation of protein synthesis. Protects formylmethionyl-tRNA from spontaneous hydrolysis and promotes its binding to the 30S ribosomal subunits. Also involved in the hydrolysis of GTP during the formation of the 70S ribosomal complex. This Halorhodospira halophila (strain DSM 244 / SL1) (Ectothiorhodospira halophila (strain DSM 244 / SL1)) protein is Translation initiation factor IF-2.